The primary structure comprises 628 residues: Beta-lactamase-like protein 1 (628 aa).

The signal sequence occupies residues 1–28 (MKNILSFSFSFSFLYILFLLLFLNNNLL). 4 N-linked (GlcNAc...) asparagine glycosylation sites follow: N45, N68, N198, and N241. Over residues 245–281 (NNNNNNNNNNNNNNNNNNNNNNNNNNNNNNNNNNNNN) the composition is skewed to low complexity. The tract at residues 245–285 (NNNNNNNNNNNNNNNNNNNNNNNNNNNNNNNNNNNNNKIKT) is disordered. N-linked (GlcNAc...) asparagine glycosylation is found at N313 and N335. The interval 494–516 (EKEEKEEEEENQQDESQQQQQQQ) is disordered. A compositionally biased stretch (acidic residues) spans 496–506 (EEKEEEEENQQ). A compositionally biased stretch (low complexity) spans 507 to 516 (DESQQQQQQQ).

This sequence belongs to the beta-lactamase family.

It localises to the secreted. This Dictyostelium discoideum (Social amoeba) protein is Beta-lactamase-like protein 1.